The sequence spans 226 residues: Late protein I226R (226 aa).

Positions 1–16 (MKMETFLVCLFHNADG) are cleaved as a signal peptide. Asn142 and Asn164 each carry an N-linked (GlcNAc...) asparagine; by host glycan.

It belongs to the asfivirus I226R family.

In terms of biological role, plays a role in the inhibition of host NF-kappa-B and IRF3 signaling pathways. Mechanistically, promotes the degradation of host IKBKG through enhancing its ubiquitination leading to inhibition of both pathways. This chain is Late protein I226R, found in Ornithodoros (relapsing fever ticks).